Consider the following 125-residue polypeptide: RutC family protein STK_08110 (125 aa).

It belongs to the RutC family.

The polypeptide is RutC family protein STK_08110 (Sulfurisphaera tokodaii (strain DSM 16993 / JCM 10545 / NBRC 100140 / 7) (Sulfolobus tokodaii)).